We begin with the raw amino-acid sequence, 484 residues long: Bifunctional protein HldE (484 aa).

A ribokinase region spans residues 1 to 320; sequence MDFSSITVLC…AELNAQDADA (320 aa). 195–198 is an ATP binding site; sequence NARE. Residue Asp-265 is part of the active site. The segment at 349 to 484 is cytidylyltransferase; the sequence is FTNGCFDIIH…RIRAAGAADR (136 aa).

It in the N-terminal section; belongs to the carbohydrate kinase PfkB family. In the C-terminal section; belongs to the cytidylyltransferase family. Homodimer.

The catalysed reaction is D-glycero-beta-D-manno-heptose 7-phosphate + ATP = D-glycero-beta-D-manno-heptose 1,7-bisphosphate + ADP + H(+). It carries out the reaction D-glycero-beta-D-manno-heptose 1-phosphate + ATP + H(+) = ADP-D-glycero-beta-D-manno-heptose + diphosphate. It functions in the pathway nucleotide-sugar biosynthesis; ADP-L-glycero-beta-D-manno-heptose biosynthesis; ADP-L-glycero-beta-D-manno-heptose from D-glycero-beta-D-manno-heptose 7-phosphate: step 1/4. The protein operates within nucleotide-sugar biosynthesis; ADP-L-glycero-beta-D-manno-heptose biosynthesis; ADP-L-glycero-beta-D-manno-heptose from D-glycero-beta-D-manno-heptose 7-phosphate: step 3/4. In terms of biological role, catalyzes the phosphorylation of D-glycero-D-manno-heptose 7-phosphate at the C-1 position to selectively form D-glycero-beta-D-manno-heptose-1,7-bisphosphate. Its function is as follows. Catalyzes the ADP transfer from ATP to D-glycero-beta-D-manno-heptose 1-phosphate, yielding ADP-D-glycero-beta-D-manno-heptose. This chain is Bifunctional protein HldE, found in Gluconacetobacter diazotrophicus (strain ATCC 49037 / DSM 5601 / CCUG 37298 / CIP 103539 / LMG 7603 / PAl5).